The following is a 252-amino-acid chain: 3-dehydroquinate dehydratase (252 aa).

3-dehydroquinate-binding positions include serine 21, 46–48, and arginine 82; that span reads EWR. The active-site Proton donor/acceptor is histidine 143. Residue lysine 170 is the Schiff-base intermediate with substrate of the active site. 3-dehydroquinate contacts are provided by arginine 213, serine 232, and glutamine 236.

This sequence belongs to the type-I 3-dehydroquinase family. In terms of assembly, homodimer.

The enzyme catalyses 3-dehydroquinate = 3-dehydroshikimate + H2O. Its pathway is metabolic intermediate biosynthesis; chorismate biosynthesis; chorismate from D-erythrose 4-phosphate and phosphoenolpyruvate: step 3/7. Its function is as follows. Involved in the third step of the chorismate pathway, which leads to the biosynthesis of aromatic amino acids. Catalyzes the cis-dehydration of 3-dehydroquinate (DHQ) and introduces the first double bond of the aromatic ring to yield 3-dehydroshikimate. This chain is 3-dehydroquinate dehydratase, found in Escherichia coli O17:K52:H18 (strain UMN026 / ExPEC).